The primary structure comprises 259 residues: Hydroxyethylthiazole kinase (259 aa).

Met50 is a binding site for substrate. ATP-binding residues include Arg122 and Thr168. Gly195 is a binding site for substrate.

Belongs to the Thz kinase family. The cofactor is Mg(2+).

It catalyses the reaction 5-(2-hydroxyethyl)-4-methylthiazole + ATP = 4-methyl-5-(2-phosphooxyethyl)-thiazole + ADP + H(+). It participates in cofactor biosynthesis; thiamine diphosphate biosynthesis; 4-methyl-5-(2-phosphoethyl)-thiazole from 5-(2-hydroxyethyl)-4-methylthiazole: step 1/1. In terms of biological role, catalyzes the phosphorylation of the hydroxyl group of 4-methyl-5-beta-hydroxyethylthiazole (THZ). The protein is Hydroxyethylthiazole kinase of Escherichia coli O127:H6 (strain E2348/69 / EPEC).